The following is a 427-amino-acid chain: Trigger factor (427 aa).

The PPIase FKBP-type domain occupies 163-248 (GDTVVIDFVG…IHEVKAKEVP (86 aa)).

It belongs to the FKBP-type PPIase family. Tig subfamily.

The protein localises to the cytoplasm. The catalysed reaction is [protein]-peptidylproline (omega=180) = [protein]-peptidylproline (omega=0). Functionally, involved in protein export. Acts as a chaperone by maintaining the newly synthesized protein in an open conformation. Functions as a peptidyl-prolyl cis-trans isomerase. The polypeptide is Trigger factor (Streptococcus suis (strain 05ZYH33)).